The chain runs to 555 residues: Probable apyrase 6 (555 aa).

The span at 1–10 (MRRSHARSRV) shows a compositional bias: basic residues. A disordered region spans residues 1-45 (MRRSHARSRVKNSSSSKSDMDPIKFQIRSGNRAPSSSSTYTLTKP). Over 1-55 (MRRSHARSRVKNSSSSKSDMDPIKFQIRSGNRAPSSSSTYTLTKPNSKHAKSNLL) the chain is Cytoplasmic. Residues 28 to 45 (RSGNRAPSSSSTYTLTKP) show a composition bias toward polar residues. The helical transmembrane segment at 56–76 (LTVGSISVVLGVLFLCYSILF) threads the bilayer. Residues 77-512 (SGGNLRGSLR…HALFSNHPKT (436 aa)) lie on the Extracellular side of the membrane. Residue 89 to 99 (VVIDGGSTGTR) participates in ATP binding. E212 functions as the Proton acceptor in the catalytic mechanism. 236 to 246 (GIVELGGASAQ) provides a ligand contact to ATP. N267 and N348 each carry an N-linked (GlcNAc...) asparagine glycan. A helical membrane pass occupies residues 513–533 (LHYLIGIPILMTVLVYLVTKW). Over 534-555 (RKPQLKTIYDLEKGRYIVTRIR) the chain is Cytoplasmic.

Belongs to the GDA1/CD39 NTPase family. Requires Ca(2+) as cofactor. As to expression, detected in mature pollen grains (at the protein level). Also expressed in the veins and hydathode regions of rosette leaves.

It localises to the cytoplasmic vesicle membrane. The catalysed reaction is a ribonucleoside 5'-triphosphate + 2 H2O = a ribonucleoside 5'-phosphate + 2 phosphate + 2 H(+). Its function is as follows. Catalyzes the hydrolysis of phosphoanhydride bonds of nucleoside tri- and di-phosphates. Involved in the regulation of pollen and anther development. In Arabidopsis thaliana (Mouse-ear cress), this protein is Probable apyrase 6 (APY6).